Here is a 339-residue protein sequence, read N- to C-terminus: Biotin synthase (339 aa).

In terms of domain architecture, Radical SAM core spans 47–276 (FYGKKVKLNM…SKEIRISGGR (230 aa)). 3 residues coordinate [4Fe-4S] cluster: cysteine 65, cysteine 69, and cysteine 72. Residues cysteine 109, cysteine 141, cysteine 201, and arginine 271 each coordinate [2Fe-2S] cluster.

The protein belongs to the radical SAM superfamily. Biotin synthase family. As to quaternary structure, homodimer. The cofactor is [4Fe-4S] cluster. Requires [2Fe-2S] cluster as cofactor.

The catalysed reaction is (4R,5S)-dethiobiotin + (sulfur carrier)-SH + 2 reduced [2Fe-2S]-[ferredoxin] + 2 S-adenosyl-L-methionine = (sulfur carrier)-H + biotin + 2 5'-deoxyadenosine + 2 L-methionine + 2 oxidized [2Fe-2S]-[ferredoxin]. Its pathway is cofactor biosynthesis; biotin biosynthesis; biotin from 7,8-diaminononanoate: step 2/2. Catalyzes the conversion of dethiobiotin (DTB) to biotin by the insertion of a sulfur atom into dethiobiotin via a radical-based mechanism. The protein is Biotin synthase of Bacillus velezensis (strain DSM 23117 / BGSC 10A6 / LMG 26770 / FZB42) (Bacillus amyloliquefaciens subsp. plantarum).